Reading from the N-terminus, the 576-residue chain is Arginine--tRNA ligase (576 aa).

The 'HIGH' region motif lies at 122–132 (PNVAKQMHVGH).

It belongs to the class-I aminoacyl-tRNA synthetase family. Monomer.

Its subcellular location is the cytoplasm. It catalyses the reaction tRNA(Arg) + L-arginine + ATP = L-arginyl-tRNA(Arg) + AMP + diphosphate. The protein is Arginine--tRNA ligase of Yersinia pseudotuberculosis serotype IB (strain PB1/+).